Consider the following 200-residue polypeptide: Mediator of RNA polymerase II transcription subunit 29 (200 aa).

2 stretches are compositionally biased toward low complexity: residues 1 to 21 (MAAS…SGPS) and 36 to 48 (AQLV…GLLQ). The disordered stretch occupies residues 1–48 (MAASQQQASAASSAAGVSGPSSAGGPGPQQQPQPPAQLVGPAQSGLLQ). Position 2 is an N-acetylalanine (A2).

The protein belongs to the Mediator complex subunit 29 family. Component of the Mediator complex, which is composed of MED1, MED4, MED6, MED7, MED8, MED9, MED10, MED11, MED12, MED13, MED13L, MED14, MED15, MED16, MED17, MED18, MED19, MED20, MED21, MED22, MED23, MED24, MED25, MED26, MED27, MED29, MED30, MED31, CCNC, CDK8 and CDC2L6/CDK11. The MED12, MED13, CCNC and CDK8 subunits form a distinct module termed the CDK8 module. Mediator containing the CDK8 module is less active than Mediator lacking this module in supporting transcriptional activation. Individual preparations of the Mediator complex lacking one or more distinct subunits have been variously termed ARC, CRSP, DRIP, PC2, SMCC and TRAP. Associates with the MED18/MED20 heteromer.

It is found in the nucleus. In terms of biological role, component of the Mediator complex, a coactivator involved in the regulated transcription of nearly all RNA polymerase II-dependent genes. Mediator functions as a bridge to convey information from gene-specific regulatory proteins to the basal RNA polymerase II transcription machinery. Mediator is recruited to promoters by direct interactions with regulatory proteins and serves as a scaffold for the assembly of a functional preinitiation complex with RNA polymerase II and the general transcription factors. This is Mediator of RNA polymerase II transcription subunit 29 (MED29) from Pongo abelii (Sumatran orangutan).